Reading from the N-terminus, the 286-residue chain is Pantothenate synthetase (286 aa).

31–38 (MGALHEGH) is a binding site for ATP. Histidine 38 (proton donor) is an active-site residue. A (R)-pantoate-binding site is contributed by glutamine 65. Glutamine 65 is a binding site for beta-alanine. 153–156 (GEKD) contacts ATP. Glutamine 159 contributes to the (R)-pantoate binding site. 190 to 193 (LSSR) contributes to the ATP binding site.

It belongs to the pantothenate synthetase family. In terms of assembly, homodimer.

The protein resides in the cytoplasm. The enzyme catalyses (R)-pantoate + beta-alanine + ATP = (R)-pantothenate + AMP + diphosphate + H(+). It functions in the pathway cofactor biosynthesis; (R)-pantothenate biosynthesis; (R)-pantothenate from (R)-pantoate and beta-alanine: step 1/1. Functionally, catalyzes the condensation of pantoate with beta-alanine in an ATP-dependent reaction via a pantoyl-adenylate intermediate. This chain is Pantothenate synthetase, found in Corynebacterium diphtheriae (strain ATCC 700971 / NCTC 13129 / Biotype gravis).